The chain runs to 333 residues: Glycerol-3-phosphate dehydrogenase [NAD(P)+] (333 aa).

Residues Tyr14, His34, and Lys108 each contribute to the NADPH site. Lys108, Gly137, and Thr139 together coordinate sn-glycerol 3-phosphate. Position 141 (Ala141) interacts with NADPH. Sn-glycerol 3-phosphate-binding residues include Lys193, Asp247, Ser257, Arg258, and Asn259. Lys193 acts as the Proton acceptor in catalysis. Arg258 serves as a coordination point for NADPH. The NADPH site is built by Leu282 and Glu284.

The protein belongs to the NAD-dependent glycerol-3-phosphate dehydrogenase family.

Its subcellular location is the cytoplasm. It catalyses the reaction sn-glycerol 3-phosphate + NAD(+) = dihydroxyacetone phosphate + NADH + H(+). The catalysed reaction is sn-glycerol 3-phosphate + NADP(+) = dihydroxyacetone phosphate + NADPH + H(+). It functions in the pathway membrane lipid metabolism; glycerophospholipid metabolism. Catalyzes the reduction of the glycolytic intermediate dihydroxyacetone phosphate (DHAP) to sn-glycerol 3-phosphate (G3P), the key precursor for phospholipid synthesis. In Blochmanniella floridana, this protein is Glycerol-3-phosphate dehydrogenase [NAD(P)+].